The chain runs to 289 residues: Putative transmembrane protein ORF289 (289 aa).

The Extracellular portion of the chain corresponds to 1–152 (MAIAKEFLLT…QYTSVVTFRT (152 aa)). The chain crosses the membrane as a helical span at residues 153-173 (LVAPILYFFALFLVPAWSTVL). At 174–234 (KQNPTFPQSQ…NGEVTSTQVN (61 aa)) the chain is on the cytoplasmic side. The helical transmembrane segment at 235–255 (APIFIGVTTPSGVLVLAYNYY) threads the bilayer. The Extracellular segment spans residues 256 to 289 (SGTISKYVSLTVTTTYGSATVINQFETKTTGGTT).

It localises to the host membrane. The protein is Putative transmembrane protein ORF289 of Acidianus sp. F28 (AFV-2).